We begin with the raw amino-acid sequence, 1835 residues long: Protein TIC 214 (1835 aa).

6 helical membrane-spanning segments follow: residues 25-45 (VGLY…LFLL), 64-84 (FITG…HLAL), 87-107 (PHTI…WNNH), 124-144 (LSIQ…HFIL), 172-192 (VGWL…LFWI), and 221-241 (IFSI…PSPI). Basic and acidic residues predominate over residues 246 to 258 (LKETSETEERGES). 3 disordered regions span residues 246 to 304 (LKET…DGNQ), 735 to 759 (EFKT…KKEE), and 1535 to 1578 (NRNQ…KRQS). Over residues 259-268 (AEETDVEIET) the composition is skewed to acidic residues. Over residues 1553-1569 (PRNRQKDLEKDYAESDI) the composition is skewed to basic and acidic residues.

This sequence belongs to the TIC214 family. Part of the Tic complex.

It localises to the plastid. Its subcellular location is the chloroplast inner membrane. Involved in protein precursor import into chloroplasts. May be part of an intermediate translocation complex acting as a protein-conducting channel at the inner envelope. This is Protein TIC 214 from Liriodendron tulipifera (Tuliptree).